The sequence spans 440 residues: Protein disulfide-isomerase A6 homolog (440 aa).

Residues 1-18 (MALIKLLLASLAITSVCG) form the signal peptide. 2 Thioredoxin domains span residues 19–131 (MYSK…AEAK) and 127–273 (LAEA…ARAQ). Active-site nucleophile residues include Cys-54 and Cys-57. Residues Cys-54 and Cys-57 are joined by a disulfide bond. The disordered stretch occupies residues 138–164 (LGGKSSGSSSSGSGSGSGKRGGGGSGN). A compositionally biased stretch (low complexity) spans 139-149 (GGKSSGSSSSG). Over residues 150 to 163 (SGSGSGKRGGGGSG) the composition is skewed to gly residues. Residues Cys-194 and Cys-197 each act as nucleophile in the active site. Cysteines 194 and 197 form a disulfide. The interval 404–426 (DGFPKIQKTEKWDGKDGALPAED) is disordered. Basic and acidic residues predominate over residues 410-419 (QKTEKWDGKD). Positions 437-440 (KTEL) match the Prevents secretion from ER motif.

This sequence belongs to the protein disulfide isomerase family.

It is found in the endoplasmic reticulum lumen. The enzyme catalyses Catalyzes the rearrangement of -S-S- bonds in proteins.. In terms of biological role, may function as a chaperone that inhibits aggregation of misfolded proteins. May negatively regulate the unfolded protein response (UPR) through binding to UPR sensors. The polypeptide is Protein disulfide-isomerase A6 homolog (Caenorhabditis elegans).